Here is a 194-residue protein sequence, read N- to C-terminus: Acireductone dioxygenase 1 (194 aa).

The tract at residues 1–21 (MEAWYMDDSADDQRKPHHRSP) is disordered. H87, H89, E93, and H132 together coordinate Fe(2+). Ni(2+) contacts are provided by H87, H89, E93, and H132.

It belongs to the acireductone dioxygenase (ARD) family. Fe(2+) serves as cofactor. It depends on Ni(2+) as a cofactor.

It is found in the cytoplasm. The protein resides in the nucleus. It catalyses the reaction 1,2-dihydroxy-5-(methylsulfanyl)pent-1-en-3-one + O2 = 4-methylsulfanyl-2-oxobutanoate + formate + 2 H(+). The catalysed reaction is 1,2-dihydroxy-5-(methylsulfanyl)pent-1-en-3-one + O2 = 3-(methylsulfanyl)propanoate + CO + formate + 2 H(+). It participates in amino-acid biosynthesis; L-methionine biosynthesis via salvage pathway; L-methionine from S-methyl-5-thio-alpha-D-ribose 1-phosphate: step 5/6. In terms of biological role, catalyzes 2 different reactions between oxygen and the acireductone 1,2-dihydroxy-3-keto-5-methylthiopentene (DHK-MTPene) depending upon the metal bound in the active site. Fe-containing acireductone dioxygenase (Fe-ARD) produces formate and 2-keto-4-methylthiobutyrate (KMTB), the alpha-ketoacid precursor of methionine in the methionine recycle pathway. Ni-containing acireductone dioxygenase (Ni-ARD) produces methylthiopropionate, carbon monoxide and formate, and does not lie on the methionine recycle pathway. The protein is Acireductone dioxygenase 1 of Physcomitrium patens (Spreading-leaved earth moss).